The chain runs to 262 residues: Aquaporin TIP3-1 (262 aa).

Helical transmembrane passes span 27-47 (AAISEFIATAIFVFAAEGSVL) and 61-81 (GLVAVALAHALALAVAVAVAV). Positions 89–91 (NPA) match the NPA 1 motif. Transmembrane regions (helical) follow at residues 104–124 (LVRAVLYWVAQLLGAVAATLL), 148–168 (AVLLEAVMTFGLMYAYYATVI), and 175–195 (VGTIAPLAVGFLLGANVLAGG). Positions 203 to 205 (NPA) match the NPA 2 motif. A helical transmembrane segment spans residues 223–243 (YWLGPFLGAGLAGLVYEYLVI).

The protein belongs to the MIP/aquaporin (TC 1.A.8) family. TIP (TC 1.A.8.10) subfamily.

Its subcellular location is the vacuole membrane. Functionally, aquaporins facilitate the transport of water and small neutral solutes across cell membranes. In Zea mays (Maize), this protein is Aquaporin TIP3-1 (TIP3-1).